Consider the following 258-residue polypeptide: 14-3-3 protein homolog (258 aa).

Belongs to the 14-3-3 family.

This chain is 14-3-3 protein homolog, found in Encephalitozoon cuniculi (strain GB-M1) (Microsporidian parasite).